Reading from the N-terminus, the 344-residue chain is Protein RecA (344 aa).

An ATP-binding site is contributed by 66–73 (GPESSGKT).

This sequence belongs to the RecA family.

The protein localises to the cytoplasm. In terms of biological role, can catalyze the hydrolysis of ATP in the presence of single-stranded DNA, the ATP-dependent uptake of single-stranded DNA by duplex DNA, and the ATP-dependent hybridization of homologous single-stranded DNAs. It interacts with LexA causing its activation and leading to its autocatalytic cleavage. The polypeptide is Protein RecA (Azoarcus sp. (strain BH72)).